We begin with the raw amino-acid sequence, 117 residues long: Histone-like protein Hq1 (117 aa).

2 stretches are compositionally biased toward basic residues: residues 1 to 17 and 39 to 50; these read MPAK…RSKA and RKLRAAQKKLAK. The disordered stretch occupies residues 1 to 117; sequence MPAKKRKTTR…RGRGRPRKKA (117 aa). A compositionally biased stretch (basic and acidic residues) spans 51-68; the sequence is AKKDASRKLAKLRKEAAR. Positions 71–117 are enriched in basic residues; it reads AAAKKTRAPSKKGRKKATRKKGGGRSRKTARKVSTMKRGRGRPRKKA.

Functionally, binds DNA in vitro. This Coxiella burnetii (strain RSA 493 / Nine Mile phase I) protein is Histone-like protein Hq1 (hcbA).